The primary structure comprises 101 residues: Integration host factor subunit alpha (101 aa).

Belongs to the bacterial histone-like protein family. Heterodimer of an alpha and a beta chain.

Functionally, this protein is one of the two subunits of integration host factor, a specific DNA-binding protein that functions in genetic recombination as well as in transcriptional and translational control. This chain is Integration host factor subunit alpha, found in Halorhodospira halophila (strain DSM 244 / SL1) (Ectothiorhodospira halophila (strain DSM 244 / SL1)).